The chain runs to 433 residues: Apolipoprotein L5 (433 aa).

The segment at His346–Gln433 is disordered. Positions Ser359 to Val371 are enriched in low complexity. Basic residues predominate over residues Arg422–Gln433.

It belongs to the apolipoprotein L family. Low level of expression; detected in uterus, testis, skeletal muscle and stomach.

Its subcellular location is the cytoplasm. May affect the movement of lipids in the cytoplasm or allow the binding of lipids to organelles. In Homo sapiens (Human), this protein is Apolipoprotein L5 (APOL5).